The primary structure comprises 723 residues: uncharacterized protein (723 aa).

Residues 1-12 (MTGKKKNRHQKK) show a composition bias toward basic residues. Disordered regions lie at residues 1 to 166 (MTGK…EKEI), 181 to 212 (IKRK…SGWG), 268 to 289 (LPLS…DNDN), and 391 to 455 (KNKS…NTST). The segment covering 30 to 42 (DETTTTTTTTTTT) has biased composition (low complexity). Basic and acidic residues-rich tracts occupy residues 45-129 (EETK…KTDD) and 149-166 (TDIK…EKEI). Positions 53-173 (IVENKDEDKK…KEIEDPNKKY (121 aa)) form a coiled coil. The span at 181–190 (IKRKKEKKVK) shows a compositional bias: basic residues. The span at 193-204 (PVQPTPPVPAPA) shows a compositional bias: pro residues. Acidic residues predominate over residues 272–288 (DTEDSDNDNDNGGDDND). Positions 397–455 (DENNNNNNNNNQQQPQQQQTTSPTLSTSPTSPKSPTTTTTNTTTTTTTNTNNNNNNTST) are enriched in low complexity.

This is an uncharacterized protein from Dictyostelium discoideum (Social amoeba).